A 125-amino-acid chain; its full sequence is MSDQHDERRRFHRIAFDADSEILQGERRWEVLLHDVSLHGILVGQPQDWNGDPQRPFEARLYLGLDVLIRMEISLAWARDGLLGFECQHIDLDSISHLRRLVELNLGDEELLERELALLVSAHDD.

6–13 provides a ligand contact to 3',3'-c-di-GMP; sequence DERRRFHR. Positions 7–103 constitute a PilZ domain; the sequence is ERRRFHRIAF…SISHLRRLVE (97 aa). Positions 9-13 match the RXXXR motif; surrounds the surface of the c-di-GMP binding site motif; it reads RRFHR. Residues 35–40 carry the DXSXXG motif; surrounds the surface of the c-di-GMP binding site motif; that stretch reads DVSLHG. Residue W77 coordinates 3',3'-c-di-GMP.

As to quaternary structure, monomer in both c-di-GMP-bound and free forms.

Binds the second messenger bis-(3'-5') cyclic dimeric guanosine monophosphate (c-di-GMP). Can bind two c-di-GMP molecules per monomer. May play a role in bacterial second-messenger regulated processes. Binding to c-di-GMP induces a conformational change of the C- and N-termini resulting in the exposure of a highly negative surface on one side of the protein to a possible effector protein. This chain is Cyclic diguanosine monophosphate-binding protein PA4608, found in Pseudomonas aeruginosa (strain ATCC 15692 / DSM 22644 / CIP 104116 / JCM 14847 / LMG 12228 / 1C / PRS 101 / PAO1).